Consider the following 85-residue polypeptide: Contulakin-Lt2 (85 aa).

The first 22 residues, 1-22 (MQMAYWVMVMMMVGITAPLSEG), serve as a signal peptide directing secretion. Residues 23 to 61 (RKLNDAIRGLVPNDLTPQLLQSLVSRRHRVFHLDNTYLK) constitute a propeptide that is removed on maturation. Residues cysteine 65 and cysteine 70 are joined by a disulfide bond. A propeptide spanning residues 76 to 85 (RRRDLKKRNK) is cleaved from the precursor.

This sequence belongs to the conotoxin C superfamily. As to expression, expressed by the venom duct.

It is found in the secreted. In terms of biological role, acts as an agonist of neurotensin receptors. It binds to human neurotensin type 1 receptor (NTSR1), rat neurotensin types 1 and 2 receptors (NTSR1/NTSR2) and mouse neurotensin type 3 receptor (SORT1). This is Contulakin-Lt2 from Conus litteratus (Lettered cone).